Here is a 192-residue protein sequence, read N- to C-terminus: UPF0149 protein VIBHAR_03551 (192 aa).

It belongs to the UPF0149 family.

The chain is UPF0149 protein VIBHAR_03551 from Vibrio campbellii (strain ATCC BAA-1116).